A 230-amino-acid polypeptide reads, in one-letter code: Cytidylate kinase (230 aa).

12–20 contributes to the ATP binding site; the sequence is GPSGAGKGT.

The protein belongs to the cytidylate kinase family. Type 1 subfamily.

It localises to the cytoplasm. It catalyses the reaction CMP + ATP = CDP + ADP. The enzyme catalyses dCMP + ATP = dCDP + ADP. The protein is Cytidylate kinase of Shewanella pealeana (strain ATCC 700345 / ANG-SQ1).